A 130-amino-acid polypeptide reads, in one-letter code: Flagellar assembly factor FliW (130 aa).

Belongs to the FliW family. As to quaternary structure, interacts with translational regulator CsrA and flagellin(s).

It localises to the cytoplasm. Functionally, acts as an anti-CsrA protein, binds CsrA and prevents it from repressing translation of its target genes, one of which is flagellin. Binds to flagellin and participates in the assembly of the flagellum. This Borreliella burgdorferi (strain ATCC 35210 / DSM 4680 / CIP 102532 / B31) (Borrelia burgdorferi) protein is Flagellar assembly factor FliW.